A 142-amino-acid polypeptide reads, in one-letter code: Baculoviral IAP repeat-containing protein 5 (142 aa).

Residues 18-88 form a BIR repeat; the sequence is RISTFKNWPF…KHSSGCAFLS (71 aa). Phosphoserine; by AURKC is present on Ser20. An N6-acetyllysine modification is found at Lys23. Thr34 carries the phosphothreonine; by CDK1 and CDK15 modification. The residue at position 48 (Thr48) is a Phosphothreonine. Residues Cys57, Cys60, His77, and Cys84 each contribute to the Zn(2+) site. Lys90, Lys110, Lys112, and Lys115 each carry N6-acetyllysine. A Phosphothreonine; by AURKB modification is found at Thr117. Lys129 is subject to N6-acetyllysine.

Belongs to the IAP family. As to quaternary structure, monomer or homodimer. Exists as a homodimer in the apo state and as a monomer in the CPC-bound state. The monomer protects cells against apoptosis more efficiently than the dimer. Only the dimeric form is capable of enhancing tubulin stability in cells. When phosphorylated, interacts with LAMTOR5/HBXIP; the resulting complex binds pro-CASP9, as well as active CASP9, but much less efficiently. Component of the chromosomal passenger complex (CPC) composed of at least BIRC5/survivin, CDCA8/borealin, INCENP, AURKB or AURKC; in the complex forms a triple-helix bundle-based subcomplex with INCENP and CDCA8. Interacts with JTB. Interacts (via BIR domain) with histone H3 phosphorylated at 'Thr-3' (H3pT3). Interacts with EVI5. Interacts with GTP-bound RAN in both the S and M phases of the cell cycle. Interacts with USP9X. Interacts with tubulin. Interacts with BIRC2/c-IAP1. The acetylated form at Lys-129 interacts with STAT3. The monomeric form deacetylated at Lys-129 interacts with XPO1/CRM1. The monomeric form interacts with XIAP/BIRC4. Both the dimeric and monomeric form can interact with DIABLO/SMAC. Interacts with BIRC6/bruce. Interacts with FBXL7; this interaction facilitates the polyubiquitination and subsequent proteasomal degradation of BIRC5 by the SCF(FBXL7) E3 ubiquitin-protein ligase complex. Ubiquitinated by the Cul9-RING ubiquitin-protein ligase complex, leading to its degradation. Ubiquitination is required for centrosomal targeting. Deubiquitinated by USP35 or USP38; leading to stabilization. Post-translationally, acetylation at Lys-129 results in its homodimerization, while deacetylation promotes the formation of monomers which heterodimerize with XPO1/CRM1 which facilitates its nuclear export. The acetylated form represses STAT3 transactivation. The dynamic equilibrium between its acetylation and deacetylation at Lys-129 determines its interaction with XPO1/CRM1, its subsequent subcellular localization, and its ability to inhibit STAT3 transactivation. In terms of processing, in vitro phosphorylation at Thr-117 by AURKB prevents interaction with INCENP and localization to mitotic chromosomes. Phosphorylation at Thr-48 by CK2 is critical for its mitotic and anti-apoptotic activities. Phosphorylation at Thr-34 by CDK15 is critical for its anti-apoptotic activity. Phosphorylation at Ser-20 by AURKC is critical for regulation of proper chromosome alignment and segregation, and possibly cytokinesis.

The protein resides in the cytoplasm. Its subcellular location is the nucleus. The protein localises to the chromosome. It is found in the centromere. It localises to the cytoskeleton. The protein resides in the spindle. Its subcellular location is the kinetochore. The protein localises to the midbody. Its function is as follows. Multitasking protein that has dual roles in promoting cell proliferation and preventing apoptosis. Component of a chromosome passage protein complex (CPC) which is essential for chromosome alignment and segregation during mitosis and cytokinesis. Acts as an important regulator of the localization of this complex; directs CPC movement to different locations from the inner centromere during prometaphase to midbody during cytokinesis and participates in the organization of the center spindle by associating with polymerized microtubules. Involved in the recruitment of CPC to centromeres during early mitosis via association with histone H3 phosphorylated at 'Thr-3' (H3pT3) during mitosis. The complex with RAN plays a role in mitotic spindle formation by serving as a physical scaffold to help deliver the RAN effector molecule TPX2 to microtubules. May counteract a default induction of apoptosis in G2/M phase. The acetylated form represses STAT3 transactivation of target gene promoters. May play a role in neoplasia. Inhibitor of CASP3 and CASP7. Essential for the maintenance of mitochondrial integrity and function. The polypeptide is Baculoviral IAP repeat-containing protein 5 (BIRC5) (Felis catus (Cat)).